We begin with the raw amino-acid sequence, 607 residues long: Autophagy-related protein 16-1 (607 aa).

The segment at tryptophan 13–leucine 43 is interaction with ATG5. Residues asparagine 78–glutamate 230 adopt a coiled-coil conformation. Residue serine 139 is modified to Phosphoserine; by CK2. The segment at alanine 207–glutamate 230 is WIPI2-binding. The interval glutamate 230–valine 242 is RB1CC1-binding. Residues serine 269 and serine 287 each carry the phosphoserine modification. Residues aspartate 296 to aspartate 299 carry the Caspase cleavage motif. WD repeat units lie at residues alanine 320–lysine 359, glycine 364–threonine 403, glycine 406–threonine 445, phenylalanine 447–glutamate 484, glutamate 486–threonine 525, lysine 532–serine 573, and glutamine 575–tyrosine 607.

It belongs to the WD repeat ATG16 family. In terms of assembly, homodimer. Homooligomer. Heterooligomer with ATG16L2. Interacts with WIPI1. Interacts with WIPI2. Interacts with RB1CC1; the interaction is required for ULK1 complex-dependent autophagy. Interacts with ATG5. Part of the minor complex composed of 4 sets of ATG12-ATG5 and ATG16L1 (400 kDa); this complex interacts with ATG3 leading to disruption of ATG7 interaction and promotion of ATG8-like proteins lipidation. Part of the major complex composed of 8 sets of ATG12-ATG5 and ATG16L1 (800 kDa). Interacts with RAB33B (GTP- and GDP-bound forms); the complex consists of a tetramer where two RAB33B molecules bind independently one molecule of the ATG16L1 homodimer; the interaction promotes ATG12-ATG5-ATG16L1 complex recruitment to phagophores. Interacts (via WD repeats) with TMEM59; the interaction mediates unconventional autophagic activity of TMEM59. Interacts with TLR2. Interacts (via WD repeats) with MEFV. Interacts with PPP1CA; the interaction dephosphorylates ATG16L1 causing dissociation of ATG12-ATG5-ATG16L1 complex. Interacts (via N-terminal) with CLTC. Interacts with NOD1. Interacts with NOD2. Interacts with TUFM. Interacts with TRIM16. Interacts (via WD repeats) with SPATA33. Interacts with IRGM. Post-translationally, proteolytic cleavage by activated CASP3 leads to degradation and may regulate autophagy upon cellular stress and apoptotic stimuli. In terms of processing, phosphorylation at Ser-139 promotes association with the ATG12-ATG5 conjugate to form the ATG12-ATG5-ATG16L1 complex.

It is found in the cytoplasm. It localises to the preautophagosomal structure membrane. The protein localises to the endosome membrane. Its subcellular location is the lysosome membrane. Functionally, plays an essential role in both canonical and non-canonical autophagy: interacts with ATG12-ATG5 to mediate the lipidation to ATG8 family proteins (MAP1LC3A, MAP1LC3B, MAP1LC3C, GABARAPL1, GABARAPL2 and GABARAP). Acts as a molecular hub, coordinating autophagy pathways via distinct domains that support either canonical or non-canonical signaling. During canonical autophagy, interacts with ATG12-ATG5 to mediate the conjugation of phosphatidylethanolamine (PE) to ATG8 proteins, to produce a membrane-bound activated form of ATG8. Thereby, controls the elongation of the nascent autophagosomal membrane. As part of the ATG8 conjugation system with ATG5 and ATG12, required for recruitment of LRRK2 to stressed lysosomes and induction of LRRK2 kinase activity in response to lysosomal stress. Also involved in non-canonical autophagy, a parallel pathway involving conjugation of ATG8 proteins to single membranes at endolysosomal compartments, probably by catalyzing conjugation of phosphatidylserine (PS) to ATG8. Non-canonical autophagy plays a key role in epithelial cells to limit lethal infection by influenza A (IAV) virus. Regulates mitochondrial antiviral signaling (MAVS)-dependent type I interferon (IFN-I) production. Negatively regulates NOD1- and NOD2-driven inflammatory cytokine response. Instead, promotes an autophagy-dependent antibacterial pathway together with NOD1 or NOD2. Plays a role in regulating morphology and function of Paneth cell. The polypeptide is Autophagy-related protein 16-1 (Homo sapiens (Human)).